Reading from the N-terminus, the 98-residue chain is NADH-ubiquinone oxidoreductase chain 4L (98 aa).

3 helical membrane passes run 1-21 (MSPI…GMLV), 26-46 (LMAS…TIAL), and 61-81 (ITLL…LVSI).

Belongs to the complex I subunit 4L family. In terms of assembly, core subunit of respiratory chain NADH dehydrogenase (Complex I) which is composed of 45 different subunits.

The protein localises to the mitochondrion inner membrane. It carries out the reaction a ubiquinone + NADH + 5 H(+)(in) = a ubiquinol + NAD(+) + 4 H(+)(out). In terms of biological role, core subunit of the mitochondrial membrane respiratory chain NADH dehydrogenase (Complex I) which catalyzes electron transfer from NADH through the respiratory chain, using ubiquinone as an electron acceptor. Part of the enzyme membrane arm which is embedded in the lipid bilayer and involved in proton translocation. In Chlorocebus aethiops (Green monkey), this protein is NADH-ubiquinone oxidoreductase chain 4L (MT-ND4L).